A 412-amino-acid polypeptide reads, in one-letter code: Eukaryotic initiation factor 4A-1 (412 aa).

N-acetylalanine is present on Ala2. Residues 39–67 (ESFDAMGLQENLLRGIYAYGFEKPSAIQQ) carry the Q motif motif. Residues 70–240 (IVPFCKGLDV…RKFMSKPVRI (171 aa)) form the Helicase ATP-binding domain. Position 83 to 90 (83 to 90 (AQSGTGKT)) interacts with ATP. Ser104 is modified (phosphoserine). Thr145 bears the Phosphothreonine mark. The short motif at 188-191 (DEAD) is the DEAD box element. The 162-residue stretch at 251–412 (GIKQFYVNVE…ELPSNVADLL (162 aa)) folds into the Helicase C-terminal domain.

It belongs to the DEAD box helicase family. eIF4A subfamily. EIF4F is a multi-subunit complex, the composition of which varies with external and internal environmental conditions. It is composed of at least EIF4A, EIF4E and EIF4G. Interacts with CDKA-1. Interacts with MRF1, MRF2, MRF3/ECIP1 and MRF4. As to expression, highly expressed in the whole plant.

The protein resides in the cytoplasm. It catalyses the reaction ATP + H2O = ADP + phosphate + H(+). Functionally, ATP-dependent RNA helicase which is a subunit of the eIF4F complex involved in cap recognition and is required for mRNA binding to ribosome. In the current model of translation initiation, eIF4A unwinds RNA secondary structures in the 5'-UTR of mRNAs which is necessary to allow efficient binding of the small ribosomal subunit, and subsequent scanning for the initiator codon. The protein is Eukaryotic initiation factor 4A-1 of Arabidopsis thaliana (Mouse-ear cress).